The primary structure comprises 276 residues: MLMITSFANPRVAQAFVDYMATQGVILTIQQHNQSDVWLADESQAERVRAELARFLENPADPRYLAASWQAGHTGSGLHYRRYPFFAALRERAGPVTWVMMIACVVVFIAMQILGDQEVMLWLAWPFDPTLKFEFWRYFTHALMHFSLMHILFNLLWWWYLGGAVEKRLGSGKLIVITLISALLSGYVQQKFSGPWFGGLSGVVYALMGYVWLRGERDPQSGIYLQRGLIIFALIWIVAGWFDLFGMSMANGAHIAGLAVGLAMAFVDSLNARKRK.

A run of 6 helical transmembrane segments spans residues 94–114, 142–162, 169–189, 192–212, 229–249, and 250–270; these read GPVT…MQIL, ALMH…WYLG, LGSG…GYVQ, FSGP…GYVW, LIIF…GMSM, and ANGA…VDSL. Residue Ser-201 is the Nucleophile of the active site. His-254 is an active-site residue.

This sequence belongs to the peptidase S54 family.

The protein resides in the cell inner membrane. It carries out the reaction Cleaves type-1 transmembrane domains using a catalytic dyad composed of serine and histidine that are contributed by different transmembrane domains.. Rhomboid-type serine protease that catalyzes intramembrane proteolysis. The chain is Rhomboid protease GlpG from Escherichia coli O45:K1 (strain S88 / ExPEC).